The chain runs to 138 residues: Spermidine export protein MdtJ (138 aa).

Helical transmembrane passes span 1–21 (MIYW…TLSM), 30–50 (VVGM…LAMA), 54–74 (VALG…ITVF), and 81–101 (ESLS…IMLI).

It belongs to the drug/metabolite transporter (DMT) superfamily. Small multidrug resistance (SMR) (TC 2.A.7.1) family. MdtJ subfamily. In terms of assembly, forms a complex with MdtI.

It localises to the cell inner membrane. Catalyzes the excretion of spermidine. This Photorhabdus laumondii subsp. laumondii (strain DSM 15139 / CIP 105565 / TT01) (Photorhabdus luminescens subsp. laumondii) protein is Spermidine export protein MdtJ.